The sequence spans 566 residues: Repressible alkaline phosphatase (566 aa).

Positions 1 to 11 are enriched in polar residues; it reads MMTHTLPSEQT. Residues 1-27 form a disordered region; the sequence is MMTHTLPSEQTRLVPGSDSSSRPKKRR. Residues 1–33 are Cytoplasmic-facing; sequence MMTHTLPSEQTRLVPGSDSSSRPKKRRISKRSK. Residues 34-59 form a helical membrane-spanning segment; sequence IIVSTVVCIGLLLVLVQLAFPSSFAL. Residue aspartate 75 coordinates Mg(2+). Aspartate 75 contacts Zn(2+). The Phosphoserine intermediate role is filled by serine 123. Position 123 is a phosphoserine (serine 123). Mg(2+) is bound by residues aspartate 174 and threonine 176. An N-linked (GlcNAc...) asparagine glycan is attached at asparagine 268. Glutamate 325 is a binding site for Mg(2+). Positions 330, 334, 373, and 374 each coordinate Zn(2+). Asparagine 401 is a glycosylation site (N-linked (GlcNAc...) asparagine). Position 484 (histidine 484) interacts with Zn(2+).

This sequence belongs to the alkaline phosphatase family. Mg(2+) serves as cofactor. It depends on Zn(2+) as a cofactor.

The protein resides in the vacuole membrane. It localises to the cytoplasm. The catalysed reaction is a phosphate monoester + H2O = an alcohol + phosphate. It catalyses the reaction (2E,6E)-farnesyl diphosphate + H2O = (2E,6E)-farnesol + diphosphate. The enzyme catalyses beta-D-fructose 2,6-bisphosphate + H2O = beta-D-fructose 2-phosphate + phosphate. Functionally, phosphatase with broad substrate specificity. A truncated (soluble) version of the protein is responsible for the production of (E,E)-farnesol from (E,E)-farnesyl diphosphate. Acts as a fructose-2,6-bisphosphate 6-phosphatase. In Saccharomyces cerevisiae (strain ATCC 204508 / S288c) (Baker's yeast), this protein is Repressible alkaline phosphatase (PHO8).